The following is a 66-amino-acid chain: Large ribosomal subunit protein bL35 (66 aa).

The protein belongs to the bacterial ribosomal protein bL35 family.

This chain is Large ribosomal subunit protein bL35, found in Rhodopseudomonas palustris (strain BisB18).